Reading from the N-terminus, the 93-residue chain is Beta-defensin 128 (93 aa).

Residues Met-1–Gly-18 form the signal peptide. Disulfide bonds link Cys-24/Cys-52, Cys-32/Cys-46, and Cys-36/Cys-53.

It belongs to the beta-defensin family.

The protein resides in the secreted. Functionally, has antibacterial activity. The protein is Beta-defensin 128 (DEFB128) of Macaca fascicularis (Crab-eating macaque).